The primary structure comprises 300 residues: Tubulin polyglutamylase complex subunit 2 (300 aa).

The segment at Lys257–Lys300 is disordered. Residues Pro276–Lys300 show a composition bias toward low complexity.

Part of the neuronal tubulin polyglutamylase complex which contains TPGS1, TPGS2, TTLL1, LRRC49 and NICN1. Interacts with CSTPP1 and LRRC49.

Its subcellular location is the cytoplasm. It is found in the cytoskeleton. The protein resides in the microtubule organizing center. It localises to the centrosome. The protein localises to the centriolar satellite. Functionally, subunit of the tubulin polyglutamylase complex (TPGC). The complex mediates cilia and flagella polyglutamylation which is essential for their biogenesis and motility. This chain is Tubulin polyglutamylase complex subunit 2 (TPGS2), found in Homo sapiens (Human).